We begin with the raw amino-acid sequence, 1406 residues long: DNA-directed RNA polymerase subunit beta' (1406 aa).

The Zn(2+) site is built by Cys-70, Cys-72, Cys-85, and Cys-88. Mg(2+) is bound by residues Asp-460, Asp-462, and Asp-464. The Zn(2+) site is built by Cys-814, Cys-889, Cys-896, and Cys-899.

The protein belongs to the RNA polymerase beta' chain family. In terms of assembly, the RNAP catalytic core consists of 2 alpha, 1 beta, 1 beta' and 1 omega subunit. When a sigma factor is associated with the core the holoenzyme is formed, which can initiate transcription. Requires Mg(2+) as cofactor. Zn(2+) is required as a cofactor.

It catalyses the reaction RNA(n) + a ribonucleoside 5'-triphosphate = RNA(n+1) + diphosphate. DNA-dependent RNA polymerase catalyzes the transcription of DNA into RNA using the four ribonucleoside triphosphates as substrates. The sequence is that of DNA-directed RNA polymerase subunit beta' from Psychromonas ingrahamii (strain DSM 17664 / CCUG 51855 / 37).